A 266-amino-acid polypeptide reads, in one-letter code: Aliphatic sulfonates import ATP-binding protein SsuB (266 aa).

An ABC transporter domain is found at 23–244 (LALDAITKHY…RRGSAKLAEL (222 aa)). 55–62 (GRSGCGKS) contributes to the ATP binding site.

This sequence belongs to the ABC transporter superfamily. Aliphatic sulfonates importer (TC 3.A.1.17.2) family. The complex is composed of two ATP-binding proteins (SsuB), two transmembrane proteins (SsuC) and a solute-binding protein (SsuA).

It localises to the cell inner membrane. The enzyme catalyses ATP + H2O + aliphatic sulfonate-[sulfonate-binding protein]Side 1 = ADP + phosphate + aliphatic sulfonateSide 2 + [sulfonate-binding protein]Side 1.. Its function is as follows. Part of the ABC transporter complex SsuABC involved in aliphatic sulfonates import. Responsible for energy coupling to the transport system. In Pectobacterium atrosepticum (strain SCRI 1043 / ATCC BAA-672) (Erwinia carotovora subsp. atroseptica), this protein is Aliphatic sulfonates import ATP-binding protein SsuB.